A 248-amino-acid chain; its full sequence is tRNA (guanine-N(1)-)-methyltransferase (248 aa).

S-adenosyl-L-methionine-binding positions include G117 and 137–142; that span reads LGDFVL.

This sequence belongs to the RNA methyltransferase TrmD family. As to quaternary structure, homodimer.

The protein localises to the cytoplasm. The enzyme catalyses guanosine(37) in tRNA + S-adenosyl-L-methionine = N(1)-methylguanosine(37) in tRNA + S-adenosyl-L-homocysteine + H(+). Specifically methylates guanosine-37 in various tRNAs. The polypeptide is tRNA (guanine-N(1)-)-methyltransferase (Herminiimonas arsenicoxydans).